We begin with the raw amino-acid sequence, 783 residues long: uncharacterized protein (783 aa).

The disordered stretch occupies residues 1–22 (MVNTRGYTTLPNVEEPANNSQD). Topologically, residues 1–109 (MVNTRGYTTL…SKIGNVMVMR (109 aa)) are cytoplasmic. Residues 110–127 (RIFYIMMMSIIAALIIAS) form a helical; Signal-anchor for type II membrane protein membrane-spanning segment. The Extracellular portion of the chain corresponds to 128 to 783 (DRLPNGKARG…NLHGINTNEF (656 aa)). N-linked (GlcNAc...) asparagine glycosylation is found at N139 and N213. A PA domain is found at 241 to 333 (HNGQLNNIPV…GTGDALTPEW (93 aa)). N-linked (GlcNAc...) asparagine glycosylation is present at N529.

Its subcellular location is the cell membrane. This is an uncharacterized protein from Saccharomyces cerevisiae (strain ATCC 204508 / S288c) (Baker's yeast).